Here is a 409-residue protein sequence, read N- to C-terminus: Tyrosine--tRNA ligase (409 aa).

The 'HIGH' region motif lies at 43-52; it reads PTAPDLHLGH. The short motif at 227–231 is the 'KMSKS' region element; that stretch reads KMSKS. Lys-230 is an ATP binding site. The region spanning 338–399 is the S4 RNA-binding domain; it reads LALPQLLKLA…GKRKFAKVTL (62 aa).

Belongs to the class-I aminoacyl-tRNA synthetase family. TyrS type 2 subfamily. Homodimer.

It localises to the cytoplasm. The enzyme catalyses tRNA(Tyr) + L-tyrosine + ATP = L-tyrosyl-tRNA(Tyr) + AMP + diphosphate + H(+). Functionally, catalyzes the attachment of tyrosine to tRNA(Tyr) in a two-step reaction: tyrosine is first activated by ATP to form Tyr-AMP and then transferred to the acceptor end of tRNA(Tyr). This chain is Tyrosine--tRNA ligase, found in Nitrosomonas europaea (strain ATCC 19718 / CIP 103999 / KCTC 2705 / NBRC 14298).